Consider the following 123-residue polypeptide: Small ribosomal subunit protein uS12 (123 aa).

Aspartate 89 is subject to 3-methylthioaspartic acid.

Belongs to the universal ribosomal protein uS12 family. As to quaternary structure, part of the 30S ribosomal subunit. Contacts proteins S8 and S17. May interact with IF1 in the 30S initiation complex.

Functionally, with S4 and S5 plays an important role in translational accuracy. In terms of biological role, interacts with and stabilizes bases of the 16S rRNA that are involved in tRNA selection in the A site and with the mRNA backbone. Located at the interface of the 30S and 50S subunits, it traverses the body of the 30S subunit contacting proteins on the other side and probably holding the rRNA structure together. The combined cluster of proteins S8, S12 and S17 appears to hold together the shoulder and platform of the 30S subunit. In Rhodospirillum centenum (strain ATCC 51521 / SW), this protein is Small ribosomal subunit protein uS12.